Consider the following 387-residue polypeptide: Chaperone protein DnaJ (387 aa).

One can recognise a J domain in the interval 6 to 70 (DYYEILGLSR…EKRAQYDRFG (65 aa)). A CR-type zinc finger spans residues 130–212 (GVRKDIDVPR…CSGTGRVRNT (83 aa)). Zn(2+) contacts are provided by cysteine 143, cysteine 146, cysteine 160, cysteine 163, cysteine 186, cysteine 189, cysteine 200, and cysteine 203. CXXCXGXG motif repeat units follow at residues 143–150 (CSNCSGTG), 160–167 (CPTCGGTG), 186–193 (CSTCRGKG), and 200–207 (CPVCSGTG). Positions 143-162 (CSNCSGTGARPGTSPKRCPT) are disordered.

It belongs to the DnaJ family. Homodimer. Requires Zn(2+) as cofactor.

The protein localises to the cytoplasm. Functionally, participates actively in the response to hyperosmotic and heat shock by preventing the aggregation of stress-denatured proteins and by disaggregating proteins, also in an autonomous, DnaK-independent fashion. Unfolded proteins bind initially to DnaJ; upon interaction with the DnaJ-bound protein, DnaK hydrolyzes its bound ATP, resulting in the formation of a stable complex. GrpE releases ADP from DnaK; ATP binding to DnaK triggers the release of the substrate protein, thus completing the reaction cycle. Several rounds of ATP-dependent interactions between DnaJ, DnaK and GrpE are required for fully efficient folding. Also involved, together with DnaK and GrpE, in the DNA replication of plasmids through activation of initiation proteins. The chain is Chaperone protein DnaJ from Methanosarcina thermophila.